The following is a 123-amino-acid chain: PTS-dependent dihydroxyacetone kinase, phosphotransferase subunit DhaM (123 aa).

Residues 2–123 form the PTS EIIA type-4 domain; sequence TYGIVIVSHS…EQLEKMLIEK (122 aa). Histidine 10 serves as the catalytic Tele-phosphohistidine intermediate; for EIIA activity.

As to quaternary structure, homodimer. The dihydroxyacetone kinase complex is composed of a homodimer of DhaM, a homodimer of DhaK and the subunit DhaL.

It catalyses the reaction dihydroxyacetone + phosphoenolpyruvate = dihydroxyacetone phosphate + pyruvate. It participates in polyol metabolism; glycerol degradation. Functionally, component of the dihydroxyacetone kinase complex, which is responsible for the phosphoenolpyruvate (PEP)-dependent phosphorylation of dihydroxyacetone. DhaM serves as the phosphoryl donor. Is phosphorylated by phosphoenolpyruvate in an EI- and HPr-dependent reaction, and a phosphorelay system on histidine residues finally leads to phosphoryl transfer to DhaL and dihydroxyacetone. The polypeptide is PTS-dependent dihydroxyacetone kinase, phosphotransferase subunit DhaM (Lactococcus lactis subsp. lactis (strain IL1403) (Streptococcus lactis)).